The primary structure comprises 4083 residues: Dynein axonemal heavy chain 3 (4083 aa).

Disordered stretches follow at residues 1 to 37 and 111 to 132; these read MSDT…VSAN and DKTS…PSKK. The tract at residues 1-1357 is stem; sequence MSDTNCSAQK…HVQMITTEAL (1357 aa). Coiled coils occupy residues 1026-1052 and 1108-1133; these read IKPI…AWLK and RMTE…YLEK. AAA regions lie at residues 1358 to 1579, 1639 to 1870, 2003 to 2251, and 2362 to 2613; these read YGYE…VLTA, EALN…LHCK, TIPA…VIQG, and EFNS…LLRH. Residues 1396–1403, 1677–1684, 2041–2048, and 2401–2408 contribute to the ATP site; these read GPAGTGKT, GDPMGGKT, GPTGTGKS, and GIGGSGRQ. The segment at 2628–2927 is stalk; it reads FKTLLNSKRQ…NSLEKNIEIC (300 aa). Residues 2651–2714 adopt a coiled-coil conformation; the sequence is QKLEFASSQV…DEKEANAAAA (64 aa). AAA stretches follow at residues 3012–3242 and 3455–3679; these read LGDP…EISE and IQNF…QIQM.

Belongs to the dynein heavy chain family. Consists of at least two heavy chains and a number of intermediate and light chains.

The protein localises to the cytoplasm. Its subcellular location is the cytoskeleton. It is found in the cilium axoneme. Force generating protein of respiratory cilia. Produces force towards the minus ends of microtubules. Dynein has ATPase activity; the force-producing power stroke is thought to occur on release of ADP. Involved in sperm motility; implicated in sperm flagellar assembly. The protein is Dynein axonemal heavy chain 3 (Dnah3) of Mus musculus (Mouse).